Reading from the N-terminus, the 50-residue chain is Small ribosomal subunit protein uS14 (50 aa).

Residues Cys-15, Cys-18, Cys-33, and Cys-36 each coordinate Zn(2+).

This sequence belongs to the universal ribosomal protein uS14 family. Zinc-binding uS14 subfamily. Part of the 30S ribosomal subunit. The cofactor is Zn(2+).

Functionally, binds 16S rRNA, required for the assembly of 30S particles. The protein is Small ribosomal subunit protein uS14 of Methanosarcina acetivorans (strain ATCC 35395 / DSM 2834 / JCM 12185 / C2A).